The primary structure comprises 68 residues: Large ribosomal subunit protein bL31 (68 aa).

Cysteine 16, cysteine 18, cysteine 37, and cysteine 40 together coordinate Zn(2+).

This sequence belongs to the bacterial ribosomal protein bL31 family. Type A subfamily. Part of the 50S ribosomal subunit. Zn(2+) serves as cofactor.

Functionally, binds the 23S rRNA. This chain is Large ribosomal subunit protein bL31, found in Aquifex aeolicus (strain VF5).